An 81-amino-acid chain; its full sequence is Large ribosomal subunit protein uL23 (81 aa).

The protein belongs to the universal ribosomal protein uL23 family. In terms of assembly, part of the 50S ribosomal subunit. Contacts protein L29.

Binds to 23S rRNA. One of the proteins that surrounds the polypeptide exit tunnel on the outside of the ribosome. The protein is Large ribosomal subunit protein uL23 of Pyrobaculum aerophilum (strain ATCC 51768 / DSM 7523 / JCM 9630 / CIP 104966 / NBRC 100827 / IM2).